Here is a 310-residue protein sequence, read N- to C-terminus: uncharacterized protein (310 aa).

The HTH lysR-type domain maps to 5 to 62; that stretch reads FTEENLLAFTTAARFGSFSKAAEELGLTTSAISYTIKRMETGLDVVLFTRSTRSIELT. Residues 22–42 constitute a DNA-binding region (H-T-H motif); that stretch reads FSKAAEELGLTTSAISYTIKR.

Belongs to the LysR transcriptional regulatory family.

This is an uncharacterized protein from Escherichia coli (strain K12).